Here is a 506-residue protein sequence, read N- to C-terminus: MLEKLIILDFGSQTTQLIARRIRELNTYCEVYPYNKLPEDLSGVRGIILSGSPYSVYDSKAFRIELSELRGKLPLLGICYGAQSLVHQAGGKVEPCDSREYGRTHLTLRQPEDALLTGLQSGTTVWMSHGDTITSLPEGFEVIAGTEDVPNAAFRIRGEKTWGVQFHPEIYHSEEGTKLLGNFLDICGMKRDWTPASFIEATVQELRERLGDDKVILALSGGVDSSVVAVLLNKAIGRNLTCIFVDHGLLRKGEFERVLQDYEHLGLNVIGVNAKEKFFAALSGVTDPEQKRKIIGRGFIEVFDEEARKLKDIKWLGQGTIYPDVIESLSITGMVIKSHHNVGGLPERMNLRLVEPLRMLFKDEVRRVGLELGMMPHLIHRHPFPGPGLGIRILGEITEEKATILQNADDIYMSLMREWGLYDQVWQAGAILLPVRSVGVMGDERTYEYTVALRAVTSMDAMSADWVHLPYDFLAKVSNEIINKVRGVNRVVYDISSKPPSTIEWE.

In terms of domain architecture, Glutamine amidotransferase type-1 spans 4-192 (KLIILDFGSQ…FLDICGMKRD (189 aa)). Cys79 (nucleophile) is an active-site residue. Active-site residues include His167 and Glu169. In terms of domain architecture, GMPS ATP-PPase spans 193-381 (WTPASFIEAT…LGMMPHLIHR (189 aa)). 220 to 226 (SGGVDSS) is a binding site for ATP.

In terms of assembly, homodimer.

The enzyme catalyses XMP + L-glutamine + ATP + H2O = GMP + L-glutamate + AMP + diphosphate + 2 H(+). Its pathway is purine metabolism; GMP biosynthesis; GMP from XMP (L-Gln route): step 1/1. Functionally, catalyzes the synthesis of GMP from XMP. This chain is GMP synthase [glutamine-hydrolyzing], found in Porphyromonas gingivalis (strain ATCC 33277 / DSM 20709 / CIP 103683 / JCM 12257 / NCTC 11834 / 2561).